The following is a 631-amino-acid chain: ESX-3 secretion system protein EccA3 (631 aa).

385–392 (GPPGTGKT) lines the ATP pocket.

It belongs to the CbxX/CfxQ family. In terms of assembly, part of the ESX-3 / type VII secretion system (T7SS), which is composed of cytosolic and membrane components.

It is found in the cytoplasm. Its function is as follows. Part of the ESX-3 specialized secretion system, which is important for iron and zinc uptake or homeostasis. EccA3 exhibits ATPase activity and may provide energy for the export of ESX-3 substrates. The chain is ESX-3 secretion system protein EccA3 from Mycobacterium tuberculosis (strain CDC 1551 / Oshkosh).